A 513-amino-acid polypeptide reads, in one-letter code: Alpha-amylase mde5 (513 aa).

An N-terminal signal peptide occupies residues 1 to 25; it reads MKHNEVFGWTLKVLSFLLVVIPANA. A disulfide bridge links Cys-52 with Cys-60. Position 105 (Trp-105) interacts with substrate. Ca(2+) is bound at residue Asn-143. His-144 is a substrate binding site. The N-linked (GlcNAc...) asparagine glycan is linked to Asn-162. The cysteines at positions 171 and 184 are disulfide-linked. 2 residues coordinate Ca(2+): Glu-182 and Asp-195. Arg-224 is a substrate binding site. Positions 226, 230, and 250 each coordinate Ca(2+). Catalysis depends on Asp-226, which acts as the Nucleophile. Substrate is bound at residue 229–230; it reads KH. The Proton donor role is filled by Glu-250. Gly-254 contacts substrate. Cys-260 and Cys-304 form a disulfide bridge. Residue Asp-318 participates in substrate binding. Residue Asn-357 is glycosylated (N-linked (GlcNAc...) asparagine). Arg-365 is a binding site for substrate. Cysteines 454 and 488 form a disulfide.

This sequence belongs to the glycosyl hydrolase 13 family. The cofactor is Ca(2+).

The protein localises to the endoplasmic reticulum. The catalysed reaction is Endohydrolysis of (1-&gt;4)-alpha-D-glucosidic linkages in polysaccharides containing three or more (1-&gt;4)-alpha-linked D-glucose units.. The polypeptide is Alpha-amylase mde5 (mde5) (Schizosaccharomyces pombe (strain 972 / ATCC 24843) (Fission yeast)).